The primary structure comprises 167 residues: Peptide deformylase (167 aa).

Positions 91 and 133 each coordinate Fe cation. The active site involves glutamate 134. A Fe cation-binding site is contributed by histidine 137.

The protein belongs to the polypeptide deformylase family. Fe(2+) is required as a cofactor.

The catalysed reaction is N-terminal N-formyl-L-methionyl-[peptide] + H2O = N-terminal L-methionyl-[peptide] + formate. Its function is as follows. Removes the formyl group from the N-terminal Met of newly synthesized proteins. Requires at least a dipeptide for an efficient rate of reaction. N-terminal L-methionine is a prerequisite for activity but the enzyme has broad specificity at other positions. The sequence is that of Peptide deformylase from Buchnera aphidicola subsp. Schizaphis graminum (strain Sg).